Consider the following 390-residue polypeptide: tRNA(Met) cytidine acetate ligase (390 aa).

ATP-binding positions include 7-20 (VVEYNPFHNGHKLH), Gly-101, Asn-162, and Arg-187.

This sequence belongs to the TmcAL family.

It is found in the cytoplasm. The enzyme catalyses cytidine(34) in elongator tRNA(Met) + acetate + ATP = N(4)-acetylcytidine(34) in elongator tRNA(Met) + AMP + diphosphate. Catalyzes the formation of N(4)-acetylcytidine (ac(4)C) at the wobble position of elongator tRNA(Met), using acetate and ATP as substrates. First activates an acetate ion to form acetyladenylate (Ac-AMP) and then transfers the acetyl group to tRNA to form ac(4)C34. The polypeptide is tRNA(Met) cytidine acetate ligase (Listeria monocytogenes serotype 4b (strain CLIP80459)).